The chain runs to 237 residues: Ribonuclease PH (237 aa).

Phosphate-binding positions include R86 and 124-126 (GTR).

The protein belongs to the RNase PH family. In terms of assembly, homohexameric ring arranged as a trimer of dimers.

It catalyses the reaction tRNA(n+1) + phosphate = tRNA(n) + a ribonucleoside 5'-diphosphate. Its function is as follows. Phosphorolytic 3'-5' exoribonuclease that plays an important role in tRNA 3'-end maturation. Removes nucleotide residues following the 3'-CCA terminus of tRNAs; can also add nucleotides to the ends of RNA molecules by using nucleoside diphosphates as substrates, but this may not be physiologically important. Probably plays a role in initiation of 16S rRNA degradation (leading to ribosome degradation) during starvation. The protein is Ribonuclease PH of Shewanella piezotolerans (strain WP3 / JCM 13877).